We begin with the raw amino-acid sequence, 195 residues long: Peptidyl-tRNA hydrolase (195 aa).

Y17 is a tRNA binding site. H22 functions as the Proton acceptor in the catalytic mechanism. The tRNA site is built by F68, N70, and N116.

This sequence belongs to the PTH family. In terms of assembly, monomer.

It localises to the cytoplasm. It catalyses the reaction an N-acyl-L-alpha-aminoacyl-tRNA + H2O = an N-acyl-L-amino acid + a tRNA + H(+). Its function is as follows. Hydrolyzes ribosome-free peptidyl-tRNAs (with 1 or more amino acids incorporated), which drop off the ribosome during protein synthesis, or as a result of ribosome stalling. Catalyzes the release of premature peptidyl moieties from peptidyl-tRNA molecules trapped in stalled 50S ribosomal subunits, and thus maintains levels of free tRNAs and 50S ribosomes. The protein is Peptidyl-tRNA hydrolase of Pectobacterium carotovorum subsp. carotovorum (strain PC1).